We begin with the raw amino-acid sequence, 138 residues long: Large ribosomal subunit protein uL16 (138 aa).

A compositionally biased stretch (basic residues) spans 1-16 (MLIPKRVKYRRQHRPT). Residues 1–23 (MLIPKRVKYRRQHRPTRSGVSKG) form a disordered region.

The protein belongs to the universal ribosomal protein uL16 family. In terms of assembly, part of the 50S ribosomal subunit.

Binds 23S rRNA and is also seen to make contacts with the A and possibly P site tRNAs. This Corynebacterium aurimucosum (strain ATCC 700975 / DSM 44827 / CIP 107346 / CN-1) (Corynebacterium nigricans) protein is Large ribosomal subunit protein uL16.